Consider the following 117-residue polypeptide: Heat shock 70 kDa protein 1-like (117 aa).

ATP is bound by residues 72 to 75 (ERAK) and 84 to 87 (GSTR).

This sequence belongs to the heat shock protein 70 family. In terms of assembly, interacts with PRKN. In terms of tissue distribution, detected at higher levels in caput epididymal spermatazoa than in cauda epididymal spermatazoa (at protein level).

Its function is as follows. Molecular chaperone implicated in a wide variety of cellular processes, including protection of the proteome from stress, folding and transport of newly synthesized polypeptides, activation of proteolysis of misfolded proteins and the formation and dissociation of protein complexes. Plays a pivotal role in the protein quality control system, ensuring the correct folding of proteins, the re-folding of misfolded proteins and controlling the targeting of proteins for subsequent degradation. This is achieved through cycles of ATP binding, ATP hydrolysis and ADP release, mediated by co-chaperones. The affinity for polypeptides is regulated by its nucleotide bound state. In the ATP-bound form, it has a low affinity for substrate proteins. However, upon hydrolysis of the ATP to ADP, it undergoes a conformational change that increases its affinity for substrate proteins. It goes through repeated cycles of ATP hydrolysis and nucleotide exchange, which permits cycles of substrate binding and release. Positive regulator of PRKN translocation to damaged mitochondria. The protein is Heat shock 70 kDa protein 1-like of Mesocricetus auratus (Golden hamster).